Consider the following 289-residue polypeptide: Elongation factor Ts (289 aa).

Residues T80–V83 are involved in Mg(2+) ion dislocation from EF-Tu.

The protein belongs to the EF-Ts family.

It localises to the cytoplasm. Associates with the EF-Tu.GDP complex and induces the exchange of GDP to GTP. It remains bound to the aminoacyl-tRNA.EF-Tu.GTP complex up to the GTP hydrolysis stage on the ribosome. The sequence is that of Elongation factor Ts from Francisella tularensis subsp. holarctica (strain LVS).